A 1316-amino-acid chain; its full sequence is DNA-directed RNA polymerase subunit beta' (1316 aa).

Zn(2+) is bound by residues cysteine 60, cysteine 62, cysteine 75, and cysteine 78. Mg(2+) contacts are provided by aspartate 535, aspartate 537, and aspartate 539. Residues cysteine 891, cysteine 968, cysteine 975, and cysteine 978 each coordinate Zn(2+).

The protein belongs to the RNA polymerase beta' chain family. In terms of assembly, the RNAP catalytic core consists of 2 alpha, 1 beta, 1 beta' and 1 omega subunit. When a sigma factor is associated with the core the holoenzyme is formed, which can initiate transcription. Mg(2+) serves as cofactor. Zn(2+) is required as a cofactor.

The enzyme catalyses RNA(n) + a ribonucleoside 5'-triphosphate = RNA(n+1) + diphosphate. Its function is as follows. DNA-dependent RNA polymerase catalyzes the transcription of DNA into RNA using the four ribonucleoside triphosphates as substrates. This is DNA-directed RNA polymerase subunit beta' from Mycobacterium ulcerans (strain Agy99).